The primary structure comprises 248 residues: 14-3-3 protein homolog 2 (248 aa).

The protein belongs to the 14-3-3 family.

The sequence is that of 14-3-3 protein homolog 2 from Echinococcus multilocularis (Fox tapeworm).